The chain runs to 581 residues: Prolactin receptor (581 aa).

The first 24 residues, 1–24 (MKENVASRAVFILLLFLNASLLNG), serve as a signal peptide directing secretion. The Extracellular portion of the chain corresponds to 25–234 (QSPPGKPKII…QIPNDFPVND (210 aa)). Fibronectin type-III domains are found at residues 27-127 (PPGK…IVEP) and 129-229 (PPAN…IPND). C36 and C46 are oxidised to a cystine. N59 is a glycosylation site (N-linked (GlcNAc...) asparagine). A disulfide bond links C75 and C86. A glycan (N-linked (GlcNAc...) asparagine) is linked at N132. Residues D211 and H212 each contribute to the Zn(2+) site. Residues 215–219 (WSEWS) carry the WSXWS motif motif. The N-linked (GlcNAc...) asparagine glycan is linked to N233. Residues 235 to 258 (TTVWIFVAVLSAVICLIMVWAVAL) traverse the membrane as a helical segment. Topologically, residues 259-581 (KGYSMMTCIL…PAKEAPPALP (323 aa)) are cytoplasmic. The Box 1 motif motif lies at 267 to 275 (ILPPVPGPK). Disordered regions lie at residues 321–362 (EDQQ…LFSE) and 462–502 (LKPS…QDKT). Residues 329–349 (PSKEHMEQGVKPMHMDPDSDS) show a composition bias toward basic and acidic residues.

It belongs to the type I cytokine receptor family. Type 1 subfamily. As to quaternary structure, interacts with SMARCA1. Interacts with NEK3 and VAV2 and this interaction is prolactin-dependent.

Its subcellular location is the membrane. In terms of biological role, this is a receptor for the anterior pituitary hormone prolactin. This Cervus elaphus (Red deer) protein is Prolactin receptor (PRLR).